Reading from the N-terminus, the 447-residue chain is Argininosuccinate synthase (447 aa).

Residues 12-20 (AYSGGLDTS) and Ala39 contribute to the ATP site. Residues Tyr92 and Ser97 each contribute to the L-citrulline site. Gly122 serves as a coordination point for ATP. 3 residues coordinate L-aspartate: Thr124, Asn128, and Asp129. L-citrulline is bound at residue Asn128. L-citrulline-binding residues include Arg132, Ser182, Ser191, Glu267, and Tyr279.

It belongs to the argininosuccinate synthase family. Type 1 subfamily. Homotetramer.

The protein resides in the cytoplasm. It carries out the reaction L-citrulline + L-aspartate + ATP = 2-(N(omega)-L-arginino)succinate + AMP + diphosphate + H(+). The protein operates within amino-acid biosynthesis; L-arginine biosynthesis; L-arginine from L-ornithine and carbamoyl phosphate: step 2/3. The polypeptide is Argininosuccinate synthase (Sulfurovum sp. (strain NBC37-1)).